We begin with the raw amino-acid sequence, 270 residues long: tRNA pseudouridine synthase A (270 aa).

D51 acts as the Nucleophile in catalysis. Y109 contacts substrate.

It belongs to the tRNA pseudouridine synthase TruA family. Homodimer.

The enzyme catalyses uridine(38/39/40) in tRNA = pseudouridine(38/39/40) in tRNA. In terms of biological role, formation of pseudouridine at positions 38, 39 and 40 in the anticodon stem and loop of transfer RNAs. This chain is tRNA pseudouridine synthase A, found in Variovorax paradoxus (strain S110).